Here is a 451-residue protein sequence, read N- to C-terminus: Glutamyl-tRNA reductase (451 aa).

Residues 47–50 (TCNR), Ser-132, 137–139 (EPQ), and Gln-143 contribute to the substrate site. The active-site Nucleophile is the Cys-48. 212–217 (AAGEMN) is an NADP(+) binding site.

It belongs to the glutamyl-tRNA reductase family. In terms of assembly, homodimer.

The catalysed reaction is (S)-4-amino-5-oxopentanoate + tRNA(Glu) + NADP(+) = L-glutamyl-tRNA(Glu) + NADPH + H(+). It functions in the pathway porphyrin-containing compound metabolism; protoporphyrin-IX biosynthesis; 5-aminolevulinate from L-glutamyl-tRNA(Glu): step 1/2. In terms of biological role, catalyzes the NADPH-dependent reduction of glutamyl-tRNA(Glu) to glutamate 1-semialdehyde (GSA). This chain is Glutamyl-tRNA reductase, found in Psychrobacter sp. (strain PRwf-1).